Reading from the N-terminus, the 596-residue chain is Putative ankyrin repeat protein FPV024 (596 aa).

13 ANK repeats span residues 5–34, 37–66, 68–96, 99–128, 130–158, 162–191, 195–225, 229–258, 262–291, 295–324, 326–355, 359–389, and 394–423; these read KLRK…TFSN, ALST…DINK, KSPP…DIEK, LGNS…DPNT, FINY…SLNI, HFKT…SLTI, YNNH…PVNE, LERT…DPNI, CLGT…NVNI, TIDT…NTRL, SRNP…EVNI, EGYT…NPNM, and NENT…DVHS.

The protein is Putative ankyrin repeat protein FPV024 of Fowlpox virus (strain NVSL) (FPV).